We begin with the raw amino-acid sequence, 304 residues long: N-acetylmuramic acid 6-phosphate etherase (304 aa).

Residues 58–221 enclose the SIS domain; sequence IAERIHRGGR…STGVMIKLGK (164 aa). Glutamate 86 acts as the Proton donor in catalysis. Glutamate 117 is a catalytic residue.

Belongs to the GCKR-like family. MurNAc-6-P etherase subfamily. Homodimer.

The enzyme catalyses N-acetyl-D-muramate 6-phosphate + H2O = N-acetyl-D-glucosamine 6-phosphate + (R)-lactate. The protein operates within amino-sugar metabolism; N-acetylmuramate degradation. Its function is as follows. Specifically catalyzes the cleavage of the D-lactyl ether substituent of MurNAc 6-phosphate, producing GlcNAc 6-phosphate and D-lactate. In Clostridium beijerinckii (strain ATCC 51743 / NCIMB 8052) (Clostridium acetobutylicum), this protein is N-acetylmuramic acid 6-phosphate etherase.